The chain runs to 587 residues: tRNA (guanine(37)-N(1))-methyltransferase 2 (587 aa).

Residues Arg360 and 430-431 (DA) contribute to the S-adenosyl-L-methionine site. Positions 446–469 (ASTRSRKEDVTNKDGNHVTPTEPM) are disordered. Residues 450–461 (SRKEDVTNKDGN) show a composition bias toward basic and acidic residues. S-adenosyl-L-methionine is bound at residue Asn478.

The protein belongs to the class I-like SAM-binding methyltransferase superfamily. TRM5/TYW2 family. Monomer.

Its subcellular location is the mitochondrion matrix. The protein localises to the nucleus. The protein resides in the cytoplasm. The catalysed reaction is guanosine(37) in tRNA + S-adenosyl-L-methionine = N(1)-methylguanosine(37) in tRNA + S-adenosyl-L-homocysteine + H(+). Specifically methylates the N1 position of guanosine-37 in various cytoplasmic and mitochondrial tRNAs. Methylation is not dependent on the nature of the nucleoside 5' of the target nucleoside. This is the first step in the biosynthesis of wybutosine (yW), a modified base adjacent to the anticodon of tRNAs and required for accurate decoding. In Phaeodactylum tricornutum (strain CCAP 1055/1), this protein is tRNA (guanine(37)-N(1))-methyltransferase 2.